A 103-amino-acid polypeptide reads, in one-letter code: Large ribosomal subunit protein bL21 (103 aa).

This sequence belongs to the bacterial ribosomal protein bL21 family. In terms of assembly, part of the 50S ribosomal subunit. Contacts protein L20.

This protein binds to 23S rRNA in the presence of protein L20. The chain is Large ribosomal subunit protein bL21 from Azoarcus sp. (strain BH72).